The chain runs to 78 residues: MSRVCQVTGKGPVTGNNISHANNKTRRRFLPNLQHHRFWVESENRFVRLRVSAKGMRVIDKRGIDVVLAELRARGEKF.

The segment at 1–20 (MSRVCQVTGKGPVTGNNISH) is disordered.

Belongs to the bacterial ribosomal protein bL28 family.

The protein is Large ribosomal subunit protein bL28 of Pseudomonas putida (strain W619).